The primary structure comprises 563 residues: Urocanate hydratase (563 aa).

NAD(+)-binding positions include 53-54, Q131, 177-179, E197, R202, 243-244, 264-268, 274-275, and Y323; these read GG, GMG, NA, QTSAH, and YL. C411 is a catalytic residue. G493 serves as a coordination point for NAD(+).

It belongs to the urocanase family. Requires NAD(+) as cofactor.

The protein resides in the cytoplasm. It catalyses the reaction 4-imidazolone-5-propanoate = trans-urocanate + H2O. The protein operates within amino-acid degradation; L-histidine degradation into L-glutamate; N-formimidoyl-L-glutamate from L-histidine: step 2/3. In terms of biological role, catalyzes the conversion of urocanate to 4-imidazolone-5-propionate. This Yersinia enterocolitica serotype O:8 / biotype 1B (strain NCTC 13174 / 8081) protein is Urocanate hydratase.